The sequence spans 71 residues: Small ribosomal subunit protein bS21 (71 aa).

Residues 37–71 form a disordered region; sequence HYEKPTQERKRKAAAAVKRHMKRLSREQARRRRLY. Residues 45–71 are compositionally biased toward basic residues; sequence RKRKAAAAVKRHMKRLSREQARRRRLY.

Belongs to the bacterial ribosomal protein bS21 family.

In Alkalilimnicola ehrlichii (strain ATCC BAA-1101 / DSM 17681 / MLHE-1), this protein is Small ribosomal subunit protein bS21.